The following is a 344-amino-acid chain: Programmed cell death protein 2 (344 aa).

Zn(2+) contacts are provided by Cys135, Cys138, Cys146, Cys149, Cys155, His159, His168, and Cys172. The MYND-type; atypical zinc-finger motif lies at 135 to 172; the sequence is CRVCGCSGPKRCSRCHKAHYCSKEHQSLDWRLGHKQAC.

Ubiquitinated by PRKN, promoting proteasomal degradation.

It localises to the nucleus. May be a DNA-binding protein with a regulatory function. May play an important role in cell death and/or in regulation of cell proliferation. This is Programmed cell death protein 2 (PDCD2) from Bos taurus (Bovine).